We begin with the raw amino-acid sequence, 81 residues long: Toxin TdNa10 (81 aa).

The first 20 residues, 1–20, serve as a signal peptide directing secretion; it reads MWTFAIVLAFLLIGLDEGEA. The region spanning 21-81 is the LCN-type CS-alpha/beta domain; it reads LDGYPLSKNN…KMYPGELPCH (61 aa). 4 disulfides stabilise this stretch: Cys32/Cys80, Cys36/Cys57, Cys42/Cys62, and Cys46/Cys64.

This sequence belongs to the long (4 C-C) scorpion toxin superfamily. Sodium channel inhibitor family. Beta subfamily. As to expression, expressed by the venom gland.

It is found in the secreted. In terms of biological role, alpha toxins bind voltage-independently at site-3 of sodium channels (Nav) and inhibit the inactivation of the activated channels, thereby blocking neuronal transmission. This toxin binds, in vitro, to sodium channels and inhibits the inactivation of the activated channels. Seems not toxic to mice, crickets and sweet-water shrimps. The protein is Toxin TdNa10 of Tityus discrepans (Venezuelan scorpion).